Here is a 193-residue protein sequence, read N- to C-terminus: Ribonuclease HII (193 aa).

Residues Y15–C193 form the RNase H type-2 domain. 3 residues coordinate a divalent metal cation: D21, E22, and D112.

The protein belongs to the RNase HII family. It depends on Mn(2+) as a cofactor. The cofactor is Mg(2+).

Its subcellular location is the cytoplasm. The enzyme catalyses Endonucleolytic cleavage to 5'-phosphomonoester.. Its function is as follows. Endonuclease that specifically degrades the RNA of RNA-DNA hybrids. The sequence is that of Ribonuclease HII (rnhB) from Rickettsia prowazekii (strain Madrid E).